We begin with the raw amino-acid sequence, 606 residues long: uncharacterized protein (606 aa).

This is an uncharacterized protein from Sinorhizobium fredii (strain NBRC 101917 / NGR234).